The sequence spans 354 residues: Cysteine proteinase A (354 aa).

The first 24 residues, 1–24, serve as a signal peptide directing secretion; it reads MARRNPLLFAIVVTILFVVCYGSA. Residues 25–125 constitute a propeptide, activation peptide; it reads LIAQTPPPVD…HKEDVHVDDS (101 aa). Cystine bridges form between cysteine 150–cysteine 191, cysteine 184–cysteine 229, and cysteine 282–cysteine 330. The active site involves cysteine 153. Asparagine 208 carries an N-linked (GlcNAc...) asparagine glycan. Catalysis depends on residues histidine 289 and asparagine 309.

The protein belongs to the peptidase C1 family.

This Leishmania mexicana protein is Cysteine proteinase A (LMCPA).